The primary structure comprises 902 residues: MTRRRSTSGTSSRSSTDSGLSVDTAYLEDNKHNNFANGTSGLTDETKYRDVEDAEADVDEPFLPTSSKKLGSGSRTRQIFWALVILCLGGWVLALVLFLTHGRASSQTASETLQQQESDSGSTSAGRPVTLQQVLTGSWNPRAHAISWIAGPDGEDGLLVQRAEVDKEGYMRVDDIRSQEGDDVDSQSGRILIDKAAVRVNGETLMPTFTWPSPDLNKVLLMSNHEKNWRYSFTGRYWIFDVATQTAQPLDPSVPDGRVQLALWSPSSDAVVFVRDNNMYLRKLSSESVVSITKDGGEDLFYGIPDWVYEEEVITDKSVTWWSNDGKYVAFLRTNESAVPEFPVQYFVSRPSGKRPPPGLENYPEVRQIKYPKAGSPNPVVNLLFYDVEKDEVFPVDVPDDFPDDDRIIIEVLWASEGKVIVRATNRESDRVKVFLIDTKSRTGKLVRFEDIANLDGGWVEPSHYTKFIPADPSNGRPDDGYIDTVIHDGYDHLAYFTPLDNPDPIMLTTGEWEVVEAPSAVDLRRGIVYFVATKESPTQRHVYRVHLDGSNLQALTDTSKPGFYDVSFSDGAGYALLSYNGPSVPWQAIINTGGDEITFEKTIEKNPRLASMVETYALPTEIYQNVTIDGFTLQLVERRPPHFNPAKKYPVVFQLYNGPTSQRVDRKFTIDFQSYIASNLGYIVVTLDARGTGYSGRKVRCAVRGNLGHYEAHDQITTAKMWAKKPYVDETRMAIWGWSYGGFMTLKVLEQDAGETFQYGMAVAPVTDWRFYDSVYTERYMHTPEHNPSGYENSTITNVSALSKATRFLLIHGASDDNVHIQNTLTFVDKLDLLNVQNYDMHFYPDSDHNIYFHNAHFMIYERLSNWLINAFNGEWHQIANPVPEDSIWDSVKRSVPAFAH.

Disordered stretches follow at residues 1–23 (MTRRRSTSGTSSRSSTDSGLSVD) and 53–72 (DAEADVDEPFLPTSSKKLGS). The Cytoplasmic portion of the chain corresponds to 1-78 (MTRRRSTSGT…KLGSGSRTRQ (78 aa)). A compositionally biased stretch (low complexity) spans 7 to 21 (TSGTSSRSSTDSGLS). The chain crosses the membrane as a helical; Signal-anchor for type II membrane protein span at residues 79-99 (IFWALVILCLGGWVLALVLFL). At 100–902 (THGRASSQTA…VKRSVPAFAH (803 aa)) the chain is on the vacuolar side. 2 N-linked (GlcNAc...) asparagine glycosylation sites follow: N335 and N626. Residue S740 is the Charge relay system of the active site. N-linked (GlcNAc...) asparagine glycosylation is found at N794 and N799. Residues D817 and H850 each act as charge relay system in the active site.

The protein belongs to the peptidase S9B family.

It is found in the vacuole membrane. It carries out the reaction Release of an N-terminal dipeptide, Xaa-Yaa-|-Zaa-, from a polypeptide, preferentially when Yaa is Pro, provided Zaa is neither Pro nor hydroxyproline.. In terms of biological role, type IV dipeptidyl-peptidase which removes N-terminal dipeptides sequentially from polypeptides having unsubstituted N-termini provided that the penultimate residue is proline. The protein is Probable dipeptidyl-aminopeptidase B (dapB) of Aspergillus oryzae (strain ATCC 42149 / RIB 40) (Yellow koji mold).